The primary structure comprises 185 residues: Translation initiation factor IF-3 (185 aa).

Belongs to the IF-3 family. Monomer.

Its subcellular location is the cytoplasm. IF-3 binds to the 30S ribosomal subunit and shifts the equilibrium between 70S ribosomes and their 50S and 30S subunits in favor of the free subunits, thus enhancing the availability of 30S subunits on which protein synthesis initiation begins. This Bacteroides thetaiotaomicron (strain ATCC 29148 / DSM 2079 / JCM 5827 / CCUG 10774 / NCTC 10582 / VPI-5482 / E50) protein is Translation initiation factor IF-3.